Here is a 193-residue protein sequence, read N- to C-terminus: Iron-sulfur flavoprotein MJ1083 (193 aa).

[4Fe-4S] cluster-binding residues include Cys-47, Cys-50, Cys-53, and Cys-59.

The protein belongs to the SsuE family. Isf subfamily. In terms of assembly, homodimer. FMN serves as cofactor. It depends on [4Fe-4S] cluster as a cofactor.

Redox-active protein probably involved in electron transport. The polypeptide is Iron-sulfur flavoprotein MJ1083 (Methanocaldococcus jannaschii (strain ATCC 43067 / DSM 2661 / JAL-1 / JCM 10045 / NBRC 100440) (Methanococcus jannaschii)).